We begin with the raw amino-acid sequence, 366 residues long: Apolipoprotein A-V (366 aa).

A signal peptide spans 1 to 23; that stretch reads MASMAAVLTWALALLSAFSATQA. Coiled-coil stretches lie at residues 54–157 and 236–262; these read ATLK…VGED and TLKA…RAFA. A Phosphothreonine; by FAM20C modification is found at Thr55. Phosphoserine is present on Ser59.

It belongs to the apolipoprotein A1/A4/E family. As to quaternary structure, interacts with GPIHBP1. Interacts with SORL1; this interaction leads to APOA5 internalization and sorting either to lysosomes and degradation, or to the trans-Golgi network. Phosphorylated by FAM20C in the extracellular medium. Liver and plasma.

It is found in the secreted. The protein localises to the early endosome. Its subcellular location is the late endosome. It localises to the golgi apparatus. The protein resides in the trans-Golgi network. Functionally, minor apolipoprotein mainly associated with HDL and to a lesser extent with VLDL. May also be associated with chylomicrons. Important determinant of plasma triglyceride (TG) levels by both being a potent stimulator of apo-CII lipoprotein lipase (LPL) TG hydrolysis and an inhibitor of the hepatic VLDL-TG production rate (without affecting the VLDL-apoB production rate). Activates poorly lecithin:cholesterol acyltransferase (LCAT) and does not enhance efflux of cholesterol from macrophages. Binds heparin. The protein is Apolipoprotein A-V (APOA5) of Homo sapiens (Human).